Reading from the N-terminus, the 418-residue chain is UDP-N-acetyl-D-mannosamine dehydrogenase (418 aa).

NAD(+) is bound by residues Y10, I11, D30, T85, and T119. 9 residues coordinate UDP-N-acetyl-alpha-D-mannosaminouronate: R152, V153, K204, N208, R211, H242, R244, T249, and G255. K204 acts as the Proton donor/acceptor in catalysis. Catalysis depends on C258, which acts as the Nucleophile. K261 is an NAD(+) binding site. UDP-N-acetyl-alpha-D-mannosaminouronate is bound by residues Y318 and K319. NAD(+) is bound at residue R326. R398 contributes to the UDP-N-acetyl-alpha-D-mannosaminouronate binding site.

It belongs to the UDP-glucose/GDP-mannose dehydrogenase family. In terms of assembly, homodimer.

The enzyme catalyses UDP-N-acetyl-alpha-D-mannosamine + 2 NAD(+) + H2O = UDP-N-acetyl-alpha-D-mannosaminouronate + 2 NADH + 3 H(+). Its function is as follows. Catalyzes the four-electron oxidation of UDP-N-acetyl-D-mannosamine (UDP-ManNAc), reducing NAD(+) and releasing UDP-N-acetylmannosaminuronic acid (UDP-ManNAcA). This Pyrococcus horikoshii (strain ATCC 700860 / DSM 12428 / JCM 9974 / NBRC 100139 / OT-3) protein is UDP-N-acetyl-D-mannosamine dehydrogenase.